Consider the following 286-residue polypeptide: Aspartate-semialdehyde dehydrogenase (286 aa).

Residues 10–13 (RGMV), 37–38 (TS), and Gln-74 each bind NADP(+). Arg-103 provides a ligand contact to phosphate. The active-site Acyl-thioester intermediate is Cys-136. Substrate is bound at residue Gln-163. NADP(+) is bound by residues 166–167 (SG) and Pro-194. Glu-242 serves as a coordination point for substrate. Lys-245 serves as a coordination point for phosphate. Arg-269 provides a ligand contact to substrate. His-276 (proton acceptor) is an active-site residue.

Belongs to the aspartate-semialdehyde dehydrogenase family. Homodimer.

It catalyses the reaction L-aspartate 4-semialdehyde + phosphate + NADP(+) = 4-phospho-L-aspartate + NADPH + H(+). It participates in amino-acid biosynthesis; L-lysine biosynthesis via DAP pathway; (S)-tetrahydrodipicolinate from L-aspartate: step 2/4. The protein operates within amino-acid biosynthesis; L-methionine biosynthesis via de novo pathway; L-homoserine from L-aspartate: step 2/3. It functions in the pathway amino-acid biosynthesis; L-threonine biosynthesis; L-threonine from L-aspartate: step 2/5. In terms of biological role, catalyzes the NADPH-dependent formation of L-aspartate-semialdehyde (L-ASA) by the reductive dephosphorylation of L-aspartyl-4-phosphate. In Actinobacillus pleuropneumoniae (Haemophilus pleuropneumoniae), this protein is Aspartate-semialdehyde dehydrogenase (asd).